The sequence spans 405 residues: Arginine biosynthesis bifunctional protein ArgJ (405 aa).

The substrate site is built by T167, K190, T201, E281, N400, and S405. The active-site Nucleophile is the T201.

This sequence belongs to the ArgJ family. In terms of assembly, heterotetramer of two alpha and two beta chains.

It is found in the cytoplasm. The enzyme catalyses N(2)-acetyl-L-ornithine + L-glutamate = N-acetyl-L-glutamate + L-ornithine. It catalyses the reaction L-glutamate + acetyl-CoA = N-acetyl-L-glutamate + CoA + H(+). It participates in amino-acid biosynthesis; L-arginine biosynthesis; L-ornithine and N-acetyl-L-glutamate from L-glutamate and N(2)-acetyl-L-ornithine (cyclic): step 1/1. The protein operates within amino-acid biosynthesis; L-arginine biosynthesis; N(2)-acetyl-L-ornithine from L-glutamate: step 1/4. Catalyzes two activities which are involved in the cyclic version of arginine biosynthesis: the synthesis of N-acetylglutamate from glutamate and acetyl-CoA as the acetyl donor, and of ornithine by transacetylation between N(2)-acetylornithine and glutamate. The chain is Arginine biosynthesis bifunctional protein ArgJ from Nocardia farcinica (strain IFM 10152).